Here is a 491-residue protein sequence, read N- to C-terminus: Aspartyl/glutamyl-tRNA(Asn/Gln) amidotransferase subunit B (491 aa).

It belongs to the GatB/GatE family. GatB subfamily. Heterotrimer of A, B and C subunits.

It catalyses the reaction L-glutamyl-tRNA(Gln) + L-glutamine + ATP + H2O = L-glutaminyl-tRNA(Gln) + L-glutamate + ADP + phosphate + H(+). It carries out the reaction L-aspartyl-tRNA(Asn) + L-glutamine + ATP + H2O = L-asparaginyl-tRNA(Asn) + L-glutamate + ADP + phosphate + 2 H(+). Functionally, allows the formation of correctly charged Asn-tRNA(Asn) or Gln-tRNA(Gln) through the transamidation of misacylated Asp-tRNA(Asn) or Glu-tRNA(Gln) in organisms which lack either or both of asparaginyl-tRNA or glutaminyl-tRNA synthetases. The reaction takes place in the presence of glutamine and ATP through an activated phospho-Asp-tRNA(Asn) or phospho-Glu-tRNA(Gln). In Nostoc sp. (strain PCC 7120 / SAG 25.82 / UTEX 2576), this protein is Aspartyl/glutamyl-tRNA(Asn/Gln) amidotransferase subunit B.